We begin with the raw amino-acid sequence, 308 residues long: Transaldolase (308 aa).

The Schiff-base intermediate with substrate role is filled by Lys125.

The protein belongs to the transaldolase family. Type 1 subfamily. As to quaternary structure, homodimer.

The protein resides in the cytoplasm. The catalysed reaction is D-sedoheptulose 7-phosphate + D-glyceraldehyde 3-phosphate = D-erythrose 4-phosphate + beta-D-fructose 6-phosphate. The protein operates within carbohydrate degradation; pentose phosphate pathway; D-glyceraldehyde 3-phosphate and beta-D-fructose 6-phosphate from D-ribose 5-phosphate and D-xylulose 5-phosphate (non-oxidative stage): step 2/3. Transaldolase is important for the balance of metabolites in the pentose-phosphate pathway. This Ectopseudomonas mendocina (strain ymp) (Pseudomonas mendocina) protein is Transaldolase.